We begin with the raw amino-acid sequence, 179 residues long: Bifunctional protein PyrR (179 aa).

The PRPP-binding motif lies at 100–112 (VILVDDVLFTGRT).

Belongs to the purine/pyrimidine phosphoribosyltransferase family. PyrR subfamily.

The catalysed reaction is UMP + diphosphate = 5-phospho-alpha-D-ribose 1-diphosphate + uracil. In terms of biological role, regulates the transcription of the pyrimidine nucleotide (pyr) operon in response to exogenous pyrimidines. Its function is as follows. Also displays a weak uracil phosphoribosyltransferase activity which is not physiologically significant. The chain is Bifunctional protein PyrR from Actinobacillus succinogenes (strain ATCC 55618 / DSM 22257 / CCUG 43843 / 130Z).